The primary structure comprises 501 residues: Protein translocase subunit SecD (501 aa).

6 helical membrane-spanning segments follow: residues 9 to 29, 339 to 359, 371 to 391, 394 to 414, 447 to 467, and 470 to 490; these read NLWL…YAVV, AIEQ…VVLI, ISIF…GATL, PGIA…VLIF, VTLL…VKGF, and TLAL…KVFL.

It belongs to the SecD/SecF family. SecD subfamily. As to quaternary structure, forms a complex with SecF. Part of the essential Sec protein translocation apparatus which comprises SecA, SecYEG and auxiliary proteins SecDF. Other proteins may also be involved.

The protein localises to the cell inner membrane. Part of the Sec protein translocase complex. Interacts with the SecYEG preprotein conducting channel. SecDF uses the proton motive force (PMF) to complete protein translocation after the ATP-dependent function of SecA. In Aquifex aeolicus (strain VF5), this protein is Protein translocase subunit SecD.